The chain runs to 98 residues: Large ribosomal subunit protein uL23 (98 aa).

The protein belongs to the universal ribosomal protein uL23 family. As to quaternary structure, part of the 50S ribosomal subunit. Contacts protein L29, and trigger factor when it is bound to the ribosome.

One of the early assembly proteins it binds 23S rRNA. One of the proteins that surrounds the polypeptide exit tunnel on the outside of the ribosome. Forms the main docking site for trigger factor binding to the ribosome. The polypeptide is Large ribosomal subunit protein uL23 (Dinoroseobacter shibae (strain DSM 16493 / NCIMB 14021 / DFL 12)).